A 407-amino-acid polypeptide reads, in one-letter code: Substance-P receptor (407 aa).

At 1 to 31 (MDNVLPGDSDLFPNISTNSSESNQFVQPAWQ) the chain is on the extracellular side. Residues Asn-14 and Asn-18 are each glycosylated (N-linked (GlcNAc...) asparagine). Residues 32 to 54 (IVLWAAAYTVIVVTSVVGNVVVM) form a helical membrane-spanning segment. The Cytoplasmic portion of the chain corresponds to 55–64 (WIILAHKRMR). Residues 65–86 (TVTNYFLVNLAFAEASMAAFNT) form a helical membrane-spanning segment. The Extracellular segment spans residues 87 to 106 (VVNFTYAVHNEWYYGLFYCK). Asn-89 is a glycosylation site (N-linked (GlcNAc...) asparagine). Cys-105 and Cys-180 are joined by a disulfide. The helical transmembrane segment at 107 to 128 (FHNFFPIAAVFASIYSMTAVAF) threads the bilayer. Residues 129–148 (DRYMAIIHPLQPRLSATATK) lie on the Cytoplasmic side of the membrane. The chain crosses the membrane as a helical span at residues 149–169 (VVIFVIWVLALLLAFPQGYYS). Residues 170–194 (TTETMPGRVVCMIEWPEHPNRTYEK) are Extracellular-facing. Asn-189 is a glycosylation site (N-linked (GlcNAc...) asparagine). The chain crosses the membrane as a helical span at residues 195–219 (AYHICVTVLIYFLPLLVIGYAYTVV). The Cytoplasmic portion of the chain corresponds to 220 to 248 (GITLWASEIPGDSSDRYHEQVSAKRKVVK). Residues 249 to 270 (MMIVVVCTFAICWLPFHVFFLL) traverse the membrane as a helical segment. At 271–283 (PYINPDLYVKKFI) the chain is on the extracellular side. A helical membrane pass occupies residues 284 to 308 (QQVYLAIMWLAMSSTMYNPIIYCCL). The Cytoplasmic segment spans residues 309–407 (NDRFRLGFKH…SSSFYSNMLA (99 aa)). Residue Cys-322 is the site of S-palmitoyl cysteine attachment. Residues 365–407 (HEDEAEEGPKATPSSLDLTSNGSSRSNSKTMTESSSFYSNMLA) form a disordered region. Positions 376 to 407 (TPSSLDLTSNGSSRSNSKTMTESSSFYSNMLA) are enriched in polar residues.

Belongs to the G-protein coupled receptor 1 family. In terms of assembly, interacts with ARRB1.

Its subcellular location is the cell membrane. In terms of biological role, this is a receptor for the tachykinin neuropeptide substance P. It is probably associated with G proteins that activate a phosphatidylinositol-calcium second messenger system. In Meriones unguiculatus (Mongolian jird), this protein is Substance-P receptor (TACR1).